The chain runs to 185 residues: Ribosome-recycling factor (185 aa).

This sequence belongs to the RRF family.

The protein resides in the cytoplasm. In terms of biological role, responsible for the release of ribosomes from messenger RNA at the termination of protein biosynthesis. May increase the efficiency of translation by recycling ribosomes from one round of translation to another. This is Ribosome-recycling factor from Aliarcobacter butzleri (strain RM4018) (Arcobacter butzleri).